A 755-amino-acid polypeptide reads, in one-letter code: E3 ubiquitin-protein ligase TRIM56 (755 aa).

The RING-type zinc finger occupies 21–60 (CKICLEQLRAPKTLPCLHTYCQDCLAQLADGGRVRCPECR). 2 B box-type zinc fingers span residues 98–149 (KPAC…VVDL) and 164–205 (RQAA…CLPL). Zn(2+)-binding residues include C169, H172, C192, and H197. The stretch at 216–314 (LEGLLAGVDN…AAAFARRVLS (99 aa)) forms a coiled coil. The disordered stretch occupies residues 371–484 (EEQQPQKDGG…SPALGPNLDG (114 aa)). Residues 392-404 (SQSRREDEPKTER) are compositionally biased toward basic and acidic residues. T418 and T442 each carry phosphothreonine. Positions 419–447 (PKEEKAQTTREEGAQTLEEDRAQTPHEDG) are enriched in basic and acidic residues. The segment covering 453–469 (RGGRPNKKKKFKGRLKS) has biased composition (basic residues). A Phosphoserine modification is found at S475.

This sequence belongs to the TRIM/RBCC family. In terms of assembly, homooligomer. Interacts with STING1. Interacts with TICAM1. (Microbial infection) Preferentially ubiquitinated with 'Lys-48' and 'Lys-11'-linked ubiquitin chains by Salmonella effector SopA leading to proteasomal targeting and degradation. In terms of processing, autoubiquitinated. Widely expressed (at protein level).

The protein localises to the cytoplasm. The catalysed reaction is S-ubiquitinyl-[E2 ubiquitin-conjugating enzyme]-L-cysteine + [acceptor protein]-L-lysine = [E2 ubiquitin-conjugating enzyme]-L-cysteine + N(6)-ubiquitinyl-[acceptor protein]-L-lysine.. It participates in protein modification; protein ubiquitination. In terms of biological role, E3 ubiquitin-protein ligase that plays a key role in innate antiviral immunity by mediating ubiquitination of CGAS and STING1. In response to pathogen- and host-derived double-stranded DNA (dsDNA), targets STING1 to 'Lys-63'-linked ubiquitination, thereby promoting its homodimerization, a step required for the production of type I interferon IFN-beta. Also mediate monoubiquitination of CGAS, thereby promoting CGAS oligomerization and subsequent activation. Promotes also TNFalpha-induced NF-kappa-B signaling by mediating 'Lys-63'-linked ubiquitination TAK1, leading to enhanced interaction between TAK1 and CHUK/IKKalpha. Independently of its E3 ubiquitin ligase activity, positive regulator of TLR3 signaling. Potentiates extracellular double stranded RNA (dsRNA)-induced expression of IFNB1 and interferon-stimulated genes ISG15, IFIT1/ISG56, CXCL10, OASL and CCL5/RANTES. Promotes establishment of an antiviral state by TLR3 ligand and TLR3-mediated chemokine induction following infection by hepatitis C virus. Acts as a restriction factor of Zika virus through direct interaction with the viral RNA via its C-terminal region. In Homo sapiens (Human), this protein is E3 ubiquitin-protein ligase TRIM56.